Consider the following 78-residue polypeptide: Putative membrane protein insertion efficiency factor (78 aa).

Belongs to the UPF0161 family.

It is found in the cell inner membrane. In terms of biological role, could be involved in insertion of integral membrane proteins into the membrane. This Prochlorococcus marinus (strain MIT 9312) protein is Putative membrane protein insertion efficiency factor.